Here is a 280-residue protein sequence, read N- to C-terminus: Lysosome-associated membrane glycoprotein 5 (280 aa).

The N-terminal stretch at 1–29 is a signal peptide; sequence MDLRRRALLGVDGLRVLLMLFHTVTRIMA. Topologically, residues 30 to 235 are extracellular; the sequence is EQEVENLSGL…PVDEREQLEE (206 aa). Residues Asn-35 and Asn-53 are each glycosylated (N-linked (GlcNAc...) asparagine). A helical membrane pass occupies residues 236-256; that stretch reads TLPLILGLILGLVIVVTLVIY. Topologically, residues 257–280 are cytoplasmic; that stretch reads HIHHKMTANQVQIPRDRSQYKHMG.

This sequence belongs to the LAMP family. Post-translationally, glycosylated.

It is found in the cytoplasmic vesicle membrane. Its subcellular location is the cell membrane. The protein resides in the cell projection. It localises to the dendrite. The protein localises to the cytoplasmic vesicle. It is found in the secretory vesicle. Its subcellular location is the synaptic vesicle membrane. The protein resides in the growth cone membrane. It localises to the early endosome membrane. The protein localises to the recycling endosome. It is found in the endoplasmic reticulum-Golgi intermediate compartment membrane. Its subcellular location is the endosome membrane. Plays a role in short-term synaptic plasticity in a subset of GABAergic neurons in the brain. The sequence is that of Lysosome-associated membrane glycoprotein 5 (LAMP5) from Bos taurus (Bovine).